We begin with the raw amino-acid sequence, 152 residues long: Xanthine-guanine phosphoribosyltransferase (152 aa).

5-phospho-alpha-D-ribose 1-diphosphate contacts are provided by residues 37–38 (RG), Arg69, and 88–96 (DDLVDTGGT). Arg69 is a GMP binding site. Residue Asp89 participates in Mg(2+) binding. Residues Asp92 and Ile135 each coordinate guanine. Positions 92 and 135 each coordinate xanthine. GMP-binding positions include 92–96 (DTGGT) and 134–135 (WI).

This sequence belongs to the purine/pyrimidine phosphoribosyltransferase family. XGPT subfamily. In terms of assembly, homotetramer. Mg(2+) serves as cofactor.

The protein resides in the cell inner membrane. It catalyses the reaction GMP + diphosphate = guanine + 5-phospho-alpha-D-ribose 1-diphosphate. The enzyme catalyses XMP + diphosphate = xanthine + 5-phospho-alpha-D-ribose 1-diphosphate. It carries out the reaction IMP + diphosphate = hypoxanthine + 5-phospho-alpha-D-ribose 1-diphosphate. The protein operates within purine metabolism; GMP biosynthesis via salvage pathway; GMP from guanine: step 1/1. It functions in the pathway purine metabolism; XMP biosynthesis via salvage pathway; XMP from xanthine: step 1/1. Purine salvage pathway enzyme that catalyzes the transfer of the ribosyl-5-phosphate group from 5-phospho-alpha-D-ribose 1-diphosphate (PRPP) to the N9 position of the 6-oxopurines guanine and xanthine to form the corresponding ribonucleotides GMP (guanosine 5'-monophosphate) and XMP (xanthosine 5'-monophosphate), with the release of PPi. To a lesser extent, also acts on hypoxanthine. The polypeptide is Xanthine-guanine phosphoribosyltransferase (Photobacterium profundum (strain SS9)).